Reading from the N-terminus, the 216-residue chain is Uracil phosphoribosyltransferase (216 aa).

5-phospho-alpha-D-ribose 1-diphosphate contacts are provided by residues Arg85, Arg110, and 135–143; that span reads DPMVATGYS. Residues Ile200 and 205–207 each bind uracil; that span reads GDA. Asp206 serves as a coordination point for 5-phospho-alpha-D-ribose 1-diphosphate.

The protein belongs to the UPRTase family. It depends on Mg(2+) as a cofactor.

The catalysed reaction is UMP + diphosphate = 5-phospho-alpha-D-ribose 1-diphosphate + uracil. It functions in the pathway pyrimidine metabolism; UMP biosynthesis via salvage pathway; UMP from uracil: step 1/1. Allosterically activated by GTP. Catalyzes the conversion of uracil and 5-phospho-alpha-D-ribose 1-diphosphate (PRPP) to UMP and diphosphate. This is Uracil phosphoribosyltransferase from Burkholderia pseudomallei (strain 668).